A 425-amino-acid polypeptide reads, in one-letter code: Serine--tRNA ligase (425 aa).

The disordered stretch occupies residues tyrosine 108 to proline 134. Residues proline 117–proline 134 are compositionally biased toward basic and acidic residues. An L-serine-binding site is contributed by threonine 233–glutamate 235. An ATP-binding site is contributed by arginine 264 to glutamate 266. Glutamate 287 serves as a coordination point for L-serine. Glutamate 351–serine 354 contributes to the ATP binding site. Serine 385 contributes to the L-serine binding site.

This sequence belongs to the class-II aminoacyl-tRNA synthetase family. Type-1 seryl-tRNA synthetase subfamily. In terms of assembly, homodimer. The tRNA molecule binds across the dimer.

Its subcellular location is the cytoplasm. The enzyme catalyses tRNA(Ser) + L-serine + ATP = L-seryl-tRNA(Ser) + AMP + diphosphate + H(+). It catalyses the reaction tRNA(Sec) + L-serine + ATP = L-seryl-tRNA(Sec) + AMP + diphosphate + H(+). It functions in the pathway aminoacyl-tRNA biosynthesis; selenocysteinyl-tRNA(Sec) biosynthesis; L-seryl-tRNA(Sec) from L-serine and tRNA(Sec): step 1/1. Catalyzes the attachment of serine to tRNA(Ser). Is also able to aminoacylate tRNA(Sec) with serine, to form the misacylated tRNA L-seryl-tRNA(Sec), which will be further converted into selenocysteinyl-tRNA(Sec). The protein is Serine--tRNA ligase of Synechococcus sp. (strain CC9311).